Reading from the N-terminus, the 309-residue chain is Cytochrome c biogenesis protein CcsA (309 aa).

Helical transmembrane passes span 18–38 (LGLL…GAVF), 48–68 (LITI…WSIS), 73–93 (ISNL…GQLL), 102–122 (IIPS…CFVL), 148–168 (VMLS…VLFI), 216–236 (SILV…VWAN), 250–267 (TWAF…HMRI), and 279–299 (LAST…FLGI).

This sequence belongs to the CcmF/CycK/Ccl1/NrfE/CcsA family. May interact with ccs1.

It is found in the cellular thylakoid membrane. In terms of biological role, required during biogenesis of c-type cytochromes (cytochrome c6 and cytochrome f) at the step of heme attachment. This is Cytochrome c biogenesis protein CcsA from Prochlorococcus marinus (strain AS9601).